The following is a 95-amino-acid chain: Aspartyl/glutamyl-tRNA(Asn/Gln) amidotransferase subunit C (95 aa).

This sequence belongs to the GatC family. In terms of assembly, heterotrimer of A, B and C subunits.

It catalyses the reaction L-glutamyl-tRNA(Gln) + L-glutamine + ATP + H2O = L-glutaminyl-tRNA(Gln) + L-glutamate + ADP + phosphate + H(+). The enzyme catalyses L-aspartyl-tRNA(Asn) + L-glutamine + ATP + H2O = L-asparaginyl-tRNA(Asn) + L-glutamate + ADP + phosphate + 2 H(+). Allows the formation of correctly charged Asn-tRNA(Asn) or Gln-tRNA(Gln) through the transamidation of misacylated Asp-tRNA(Asn) or Glu-tRNA(Gln) in organisms which lack either or both of asparaginyl-tRNA or glutaminyl-tRNA synthetases. The reaction takes place in the presence of glutamine and ATP through an activated phospho-Asp-tRNA(Asn) or phospho-Glu-tRNA(Gln). The sequence is that of Aspartyl/glutamyl-tRNA(Asn/Gln) amidotransferase subunit C from Chlorobium phaeovibrioides (strain DSM 265 / 1930) (Prosthecochloris vibrioformis (strain DSM 265)).